The chain runs to 370 residues: Histidinol-phosphate aminotransferase 1 (370 aa).

K222 is subject to N6-(pyridoxal phosphate)lysine.

This sequence belongs to the class-II pyridoxal-phosphate-dependent aminotransferase family. Histidinol-phosphate aminotransferase subfamily. In terms of assembly, homodimer. The cofactor is pyridoxal 5'-phosphate.

It catalyses the reaction L-histidinol phosphate + 2-oxoglutarate = 3-(imidazol-4-yl)-2-oxopropyl phosphate + L-glutamate. It functions in the pathway amino-acid biosynthesis; L-histidine biosynthesis; L-histidine from 5-phospho-alpha-D-ribose 1-diphosphate: step 7/9. The polypeptide is Histidinol-phosphate aminotransferase 1 (Bacillus cereus (strain ATCC 10987 / NRS 248)).